A 122-amino-acid chain; its full sequence is Small ribosomal subunit protein uS13 (122 aa).

Residues 95-122 (GLPVRGQRTRTNARTRKGPRKTVAKKKK) form a disordered region.

This sequence belongs to the universal ribosomal protein uS13 family. Part of the 30S ribosomal subunit. Forms a loose heterodimer with protein S19. Forms two bridges to the 50S subunit in the 70S ribosome.

Located at the top of the head of the 30S subunit, it contacts several helices of the 16S rRNA. In the 70S ribosome it contacts the 23S rRNA (bridge B1a) and protein L5 of the 50S subunit (bridge B1b), connecting the 2 subunits; these bridges are implicated in subunit movement. Contacts the tRNAs in the A and P-sites. This is Small ribosomal subunit protein uS13 from Thermoanaerobacter pseudethanolicus (strain ATCC 33223 / 39E) (Clostridium thermohydrosulfuricum).